The sequence spans 444 residues: Tryptophan 5-hydroxylase 1 (444 aa).

An ACT domain is found at 19 to 94 (SLIFSLKNEV…NVLSVNLPDN (76 aa)). The residue at position 58 (Ser58) is a Phosphoserine; by PKA. L-tryptophan contacts are provided by Tyr235, Arg257, and Thr265. Fe cation is bound by residues His272, His277, and Glu317. Ser336 and Ile366 together coordinate L-tryptophan.

The protein belongs to the biopterin-dependent aromatic amino acid hydroxylase family. Homotetramer. Interacts with DNAJC12. It depends on Fe(2+) as a cofactor. Ubiquitinated, leading to its degradation by the proteasome. Ubiquitinated is triggered by phosphorylation. Post-translationally, phosphorylated; triggering degradation by the proteasome. As to expression, seems to be less widely expressed than isoform 1.

It carries out the reaction (6R)-L-erythro-5,6,7,8-tetrahydrobiopterin + L-tryptophan + O2 = 5-hydroxy-L-tryptophan + (4aS,6R)-4a-hydroxy-L-erythro-5,6,7,8-tetrahydrobiopterin. The protein operates within aromatic compound metabolism; serotonin biosynthesis; serotonin from L-tryptophan: step 1/2. Its function is as follows. Oxidizes L-tryptophan to 5-hydroxy-l-tryptophan in the rate-determining step of serotonin biosynthesis. The chain is Tryptophan 5-hydroxylase 1 (TPH1) from Homo sapiens (Human).